Reading from the N-terminus, the 390-residue chain is ATP phosphoribosyltransferase regulatory subunit (390 aa).

Belongs to the class-II aminoacyl-tRNA synthetase family. HisZ subfamily. In terms of assembly, heteromultimer composed of HisG and HisZ subunits.

Its subcellular location is the cytoplasm. The protein operates within amino-acid biosynthesis; L-histidine biosynthesis; L-histidine from 5-phospho-alpha-D-ribose 1-diphosphate: step 1/9. Functionally, required for the first step of histidine biosynthesis. May allow the feedback regulation of ATP phosphoribosyltransferase activity by histidine. This chain is ATP phosphoribosyltransferase regulatory subunit, found in Nitrosomonas eutropha (strain DSM 101675 / C91 / Nm57).